Here is a 199-residue protein sequence, read N- to C-terminus: Probable NADH dehydrogenase [ubiquinone] iron-sulfur protein 7, mitochondrial (199 aa).

The transit peptide at 1-16 (MLSALRTAGALSTRRL) directs the protein to the mitochondrion. [4Fe-4S] cluster is bound by residues Cys74, Cys75, Cys139, and Cys169.

Belongs to the complex I 20 kDa subunit family. In terms of assembly, complex I is composed of 45 different subunits This is a component of the iron-sulfur (IP) fragment of the enzyme. [4Fe-4S] cluster serves as cofactor.

The protein localises to the mitochondrion. It carries out the reaction a ubiquinone + NADH + 5 H(+)(in) = a ubiquinol + NAD(+) + 4 H(+)(out). Core subunit of the mitochondrial membrane respiratory chain NADH dehydrogenase (Complex I) that is believed to belong to the minimal assembly required for catalysis. Complex I functions in the transfer of electrons from NADH to the respiratory chain. The immediate electron acceptor for the enzyme is believed to be ubiquinone. The protein is Probable NADH dehydrogenase [ubiquinone] iron-sulfur protein 7, mitochondrial of Caenorhabditis briggsae.